The sequence spans 487 residues: Aspartyl/glutamyl-tRNA(Asn/Gln) amidotransferase subunit B (487 aa).

This sequence belongs to the GatB/GatE family. GatB subfamily. As to quaternary structure, heterotrimer of A, B and C subunits.

The enzyme catalyses L-glutamyl-tRNA(Gln) + L-glutamine + ATP + H2O = L-glutaminyl-tRNA(Gln) + L-glutamate + ADP + phosphate + H(+). The catalysed reaction is L-aspartyl-tRNA(Asn) + L-glutamine + ATP + H2O = L-asparaginyl-tRNA(Asn) + L-glutamate + ADP + phosphate + 2 H(+). Its function is as follows. Allows the formation of correctly charged Asn-tRNA(Asn) or Gln-tRNA(Gln) through the transamidation of misacylated Asp-tRNA(Asn) or Glu-tRNA(Gln) in organisms which lack either or both of asparaginyl-tRNA or glutaminyl-tRNA synthetases. The reaction takes place in the presence of glutamine and ATP through an activated phospho-Asp-tRNA(Asn) or phospho-Glu-tRNA(Gln). This Leptospira biflexa serovar Patoc (strain Patoc 1 / Ames) protein is Aspartyl/glutamyl-tRNA(Asn/Gln) amidotransferase subunit B.